Reading from the N-terminus, the 76-residue chain is Probable insulin-like peptide alpha-type 1 (76 aa).

The first 24 residues, 1 to 24, serve as a signal peptide directing secretion; it reads MKTYSFFVLFIVFIFFISSSKSHS. 3 cysteine pairs are disulfide-bonded: Cys32-Cys60, Cys44-Cys73, and Cys48-Cys74.

The protein belongs to the insulin family.

It localises to the secreted. This chain is Probable insulin-like peptide alpha-type 1 (ins-21), found in Caenorhabditis elegans.